The primary structure comprises 179 residues: MYKFLVFSSVLVLFFAQASCQRFIQPTYRPPPTRRPIIRTARQAGQEPLWLYQGDNIPRAPSTADHPILPSKIDDVKLDPNRRYVRSVTNPENNEASIESSHHTVDIGLDRPIESHRNTRDLRFWNPREKLPLPTLPPFNPKPIYIDMGNRYRRHASDDQEELRHHNEHFLIPRDILQD.

A signal peptide spans 1–16; sequence MYKFLVFSSVLVLFFA. The propeptide occupies 17 to 120; sequence QASCQRFIQP…RPIESHRNTR (104 aa). O-linked (GalNAc...) threonine glycosylation is present at Thr-135. Residues 153–179 constitute a propeptide that is removed on maturation; sequence RRHASDDQEELRHHNEHFLIPRDILQD.

This sequence belongs to the lebocin family. In terms of processing, O-glycosylation is important for the antibacterial activity of lebocin. In terms of tissue distribution, hemolymph. Produced in fat body.

It localises to the secreted. In terms of biological role, antibacterial peptide. The sequence is that of Lebocin-4 (LEB4) from Bombyx mori (Silk moth).